A 461-amino-acid polypeptide reads, in one-letter code: ATP synthase subunit beta 2 (461 aa).

151 to 158 (GGAGVGKT) provides a ligand contact to ATP.

It belongs to the ATPase alpha/beta chains family. F-type ATPases have 2 components, CF(1) - the catalytic core - and CF(0) - the membrane proton channel. CF(1) has five subunits: alpha(3), beta(3), gamma(1), delta(1), epsilon(1). CF(0) has three main subunits: a(1), b(2) and c(9-12). The alpha and beta chains form an alternating ring which encloses part of the gamma chain. CF(1) is attached to CF(0) by a central stalk formed by the gamma and epsilon chains, while a peripheral stalk is formed by the delta and b chains.

It localises to the cell inner membrane. It catalyses the reaction ATP + H2O + 4 H(+)(in) = ADP + phosphate + 5 H(+)(out). Its function is as follows. Produces ATP from ADP in the presence of a proton gradient across the membrane. The catalytic sites are hosted primarily by the beta subunits. The sequence is that of ATP synthase subunit beta 2 from Vibrio campbellii (strain ATCC BAA-1116).